Here is a 333-residue protein sequence, read N- to C-terminus: MTSVRRAKITALGTYVPPRVLSNFDLEKMVDTTNQWILERTGIRERHLVDKGVAASDLAVEAAKKCLANRGIEAAEVECIVVGTVTPDMMYPSTACLVQHKLGIPNAWGFDVSAGCSGFLFSLTTGAKFIESGQYKKVLVIGSDVNSSMIDYTDRATCIIFGDGAGAVLLEPTEDGEDVGVMDHIHQVEGVGGQYLYMPGGGSLNPASHETIDQKMHYVHQDGQNVFKYAVKKMSEMTEKVLKRNSLTGTDVDCFIAHQANKRIIVATAERLKMPMEKVIINIEKYGNTTAGTIPLAMQTALDEGKLKKGSNVLLAAVGAGFTSGATLLRWAF.

Active-site residues include cysteine 116 and histidine 258. The tract at residues 259-263 (QANKR) is ACP-binding. The active site involves asparagine 288.

The protein belongs to the thiolase-like superfamily. FabH family. Homodimer.

Its subcellular location is the cytoplasm. It catalyses the reaction malonyl-[ACP] + acetyl-CoA + H(+) = 3-oxobutanoyl-[ACP] + CO2 + CoA. It functions in the pathway lipid metabolism; fatty acid biosynthesis. Functionally, catalyzes the condensation reaction of fatty acid synthesis by the addition to an acyl acceptor of two carbons from malonyl-ACP. Catalyzes the first condensation reaction which initiates fatty acid synthesis and may therefore play a role in governing the total rate of fatty acid production. Possesses both acetoacetyl-ACP synthase and acetyl transacylase activities. Its substrate specificity determines the biosynthesis of branched-chain and/or straight-chain of fatty acids. The sequence is that of Beta-ketoacyl-[acyl-carrier-protein] synthase III from Koribacter versatilis (strain Ellin345).